Reading from the N-terminus, the 186-residue chain is Elongation factor P (186 aa).

The protein belongs to the elongation factor P family.

The protein resides in the cytoplasm. It participates in protein biosynthesis; polypeptide chain elongation. Its function is as follows. Involved in peptide bond synthesis. Stimulates efficient translation and peptide-bond synthesis on native or reconstituted 70S ribosomes in vitro. Probably functions indirectly by altering the affinity of the ribosome for aminoacyl-tRNA, thus increasing their reactivity as acceptors for peptidyl transferase. In Shewanella denitrificans (strain OS217 / ATCC BAA-1090 / DSM 15013), this protein is Elongation factor P.